We begin with the raw amino-acid sequence, 229 residues long: Large ribosomal subunit protein uL1 (229 aa).

The protein belongs to the universal ribosomal protein uL1 family. As to quaternary structure, part of the 50S ribosomal subunit.

Functionally, binds directly to 23S rRNA. The L1 stalk is quite mobile in the ribosome, and is involved in E site tRNA release. In terms of biological role, protein L1 is also a translational repressor protein, it controls the translation of the L11 operon by binding to its mRNA. In Streptococcus pyogenes serotype M1, this protein is Large ribosomal subunit protein uL1.